An 820-amino-acid chain; its full sequence is Phenylalanine--tRNA ligase beta subunit (820 aa).

A tRNA-binding domain is found at 42-154 (KGGLEGLVIG…EDAVPGTLAK (113 aa)). Positions 413–489 (AQDFIVELTY…RIYGYNNVEI (77 aa)) constitute a B5 domain. The Mg(2+) site is built by Asp467, Asp473, Glu476, and Asp477. The 94-residue stretch at 727–820 (SKFPAVKRDL…LEDKLGAKLR (94 aa)) folds into the FDX-ACB domain.

The protein belongs to the phenylalanyl-tRNA synthetase beta subunit family. Type 1 subfamily. Tetramer of two alpha and two beta subunits. Mg(2+) serves as cofactor.

It is found in the cytoplasm. It catalyses the reaction tRNA(Phe) + L-phenylalanine + ATP = L-phenylalanyl-tRNA(Phe) + AMP + diphosphate + H(+). This is Phenylalanine--tRNA ligase beta subunit from Bacteroides fragilis (strain YCH46).